The primary structure comprises 142 residues: Hemoglobin subunit alpha (142 aa).

S1 is modified (N-acetylserine). The Globin domain occupies 1–142 (SLSDKDKNTV…LALALSERYR (142 aa)). Position 59 (H59) interacts with O2. Residue H88 coordinates heme b.

This sequence belongs to the globin family. As to quaternary structure, heterotetramer of two alpha chains and two beta chains. Can form polymers. As to expression, red blood cells.

In terms of biological role, involved in oxygen transport from gills to the various peripheral tissues. The protein is Hemoglobin subunit alpha (hba) of Chelidonichthys kumu (Bluefin gurnard).